Consider the following 298-residue polypeptide: Elongation factor Ts (298 aa).

Residues 78 to 81 (TDFV) are involved in Mg(2+) ion dislocation from EF-Tu.

It belongs to the EF-Ts family.

It localises to the cytoplasm. Associates with the EF-Tu.GDP complex and induces the exchange of GDP to GTP. It remains bound to the aminoacyl-tRNA.EF-Tu.GTP complex up to the GTP hydrolysis stage on the ribosome. This is Elongation factor Ts from Mycoplasmopsis agalactiae (strain NCTC 10123 / CIP 59.7 / PG2) (Mycoplasma agalactiae).